The primary structure comprises 287 residues: 4-diphosphocytidyl-2-C-methyl-D-erythritol kinase (287 aa).

Residue Lys22 is part of the active site. Pro102–Ser112 contacts ATP. Asp139 is an active-site residue.

The protein belongs to the GHMP kinase family. IspE subfamily.

The catalysed reaction is 4-CDP-2-C-methyl-D-erythritol + ATP = 4-CDP-2-C-methyl-D-erythritol 2-phosphate + ADP + H(+). It participates in isoprenoid biosynthesis; isopentenyl diphosphate biosynthesis via DXP pathway; isopentenyl diphosphate from 1-deoxy-D-xylulose 5-phosphate: step 3/6. Catalyzes the phosphorylation of the position 2 hydroxy group of 4-diphosphocytidyl-2C-methyl-D-erythritol. The sequence is that of 4-diphosphocytidyl-2-C-methyl-D-erythritol kinase from Dinoroseobacter shibae (strain DSM 16493 / NCIMB 14021 / DFL 12).